The primary structure comprises 166 residues: Large ribosomal subunit protein uL10 (166 aa).

This sequence belongs to the universal ribosomal protein uL10 family. As to quaternary structure, part of the ribosomal stalk of the 50S ribosomal subunit. The N-terminus interacts with L11 and the large rRNA to form the base of the stalk. The C-terminus forms an elongated spine to which L12 dimers bind in a sequential fashion forming a multimeric L10(L12)X complex.

Its function is as follows. Forms part of the ribosomal stalk, playing a central role in the interaction of the ribosome with GTP-bound translation factors. The sequence is that of Large ribosomal subunit protein uL10 from Streptococcus equi subsp. zooepidemicus (strain MGCS10565).